Consider the following 212-residue polypeptide: HTH-type transcriptional repressor KstR (212 aa).

A compositionally biased stretch (low complexity) spans 1-11; the sequence is MTTSSRSRSST. Residues 1 to 28 are disordered; that stretch reads MTTSSRSRSSTVAAATLGEDDLSSNAQK. An HTH tetR-type domain is found at 28 to 88; the sequence is KERRKRILDA…SALAREFERI (61 aa). Positions 51–70 form a DNA-binding region, H-T-H motif; sequence QMRAVAERADVAVGTLYRYF.

In terms of assembly, homodimer.

Controls the expression of genes used for utilizing diverse lipids as energy sources. The protein is HTH-type transcriptional repressor KstR (kstR) of Rhodococcus jostii (strain RHA1).